A 98-amino-acid chain; its full sequence is Class II hydrophobin 1 (98 aa).

A signal peptide spans 1–16; it reads MQFFTTVVLFAAAAMA. 4 disulfide bridges follow: Cys-29–Cys-79, Cys-39–Cys-70, Cys-40–Cys-52, and Cys-80–Cys-92.

The protein belongs to the cerato-ulmin hydrophobin family. In terms of assembly, homodimer. Homodimers further self-assemble to form highly ordered films at water-air interfaces through intermolecular interactions. In terms of tissue distribution, expressed in mycelium, conidiating mycelium and aerial hyphae.

The protein localises to the secreted. It localises to the cell wall. Functionally, aerial growth, conidiation, and dispersal of filamentous fungi in the environment rely upon a capability of their secreting small amphipathic proteins called hydrophobins (HPBs) with low sequence identity. Class I can self-assemble into an outermost layer of rodlet bundles on aerial cell surfaces, conferring cellular hydrophobicity that supports fungal growth, development and dispersal; whereas Class II form highly ordered films at water-air interfaces through intermolecular interactions but contribute nothing to the rodlet structure. Hyd1 is a class II hydrophobin that plays probably a role during conidiophore development and in intraspecific signaling or hyphal fusion. Hyd1 and Hyd3 are jointly required for conidial hydrophobicity and dispersal, but seem not to be involved in mycelia hydrophobicity. Inhibits conidial germination in environments not suitable for mycelial growth. Not necessary for root adhesion and colonization. The protein is Class II hydrophobin 1 of Bionectria ochroleuca (Gliocladium roseum).